Here is a 180-residue protein sequence, read N- to C-terminus: Ribulose bisphosphate carboxylase small subunit, chloroplastic 3 (180 aa).

A chloroplast-targeting transit peptide spans 1-56 (MASSVMSSAAVATRGNGAQASMVAPFTGLKSTASFPVSRKQNLDITSIASNGGRVS).

The protein belongs to the RuBisCO small chain family. Heterohexadecamer of 8 large and 8 small subunits. As to quaternary structure, (Microbial infection) Binds to tobamovirus movement protein; this interaction seems required for viral systemic movement.

Its subcellular location is the plastid. The protein localises to the chloroplast. The protein resides in the cell junction. It is found in the plasmodesma. Its function is as follows. RuBisCO catalyzes two reactions: the carboxylation of D-ribulose 1,5-bisphosphate, the primary event in carbon dioxide fixation, as well as the oxidative fragmentation of the pentose substrate. Both reactions occur simultaneously and in competition at the same active site. Although the small subunit is not catalytic it is essential for maximal activity. Involved in antiviral defenses. This chain is Ribulose bisphosphate carboxylase small subunit, chloroplastic 3, found in Solanum lycopersicum (Tomato).